Consider the following 244-residue polypeptide: Triosephosphate isomerase (244 aa).

9–11 (NWK) contributes to the substrate binding site. His93 serves as the catalytic Electrophile. Glu160 functions as the Proton acceptor in the catalytic mechanism. Residues Gly166 and Ser206 each coordinate substrate.

Belongs to the triosephosphate isomerase family. As to quaternary structure, homodimer.

Its subcellular location is the cytoplasm. It carries out the reaction D-glyceraldehyde 3-phosphate = dihydroxyacetone phosphate. Its pathway is carbohydrate biosynthesis; gluconeogenesis. It functions in the pathway carbohydrate degradation; glycolysis; D-glyceraldehyde 3-phosphate from glycerone phosphate: step 1/1. In terms of biological role, involved in the gluconeogenesis. Catalyzes stereospecifically the conversion of dihydroxyacetone phosphate (DHAP) to D-glyceraldehyde-3-phosphate (G3P). The protein is Triosephosphate isomerase of Mycoplasma genitalium (strain ATCC 33530 / DSM 19775 / NCTC 10195 / G37) (Mycoplasmoides genitalium).